We begin with the raw amino-acid sequence, 236 residues long: Small ribosomal subunit protein uS2c (236 aa).

The protein belongs to the universal ribosomal protein uS2 family.

The protein resides in the plastid. It localises to the chloroplast. The protein is Small ribosomal subunit protein uS2c (rps2) of Crucihimalaya wallichii (Rock-cress).